Consider the following 49-residue polypeptide: Large ribosomal subunit protein bL33 (49 aa).

The protein belongs to the bacterial ribosomal protein bL33 family.

The sequence is that of Large ribosomal subunit protein bL33 from Desulforamulus reducens (strain ATCC BAA-1160 / DSM 100696 / MI-1) (Desulfotomaculum reducens).